Here is a 1462-residue protein sequence, read N- to C-terminus: uncharacterized protein (1462 aa).

A helical membrane pass occupies residues 119 to 139 (TGYITSLCLSAILKFFSFRII). Phosphoserine is present on residues serine 411 and serine 420. The SEC7 domain maps to 541–730 (TLIESKKRKA…SEIYKAIKEN (190 aa)). The HEAT repeat unit spans residues 1102 to 1139 (ENSEDWGLFSKLCNLLNDKNIVVRNQSLSLFHQLVNKY).

It localises to the cytoplasm. Its subcellular location is the golgi apparatus membrane. This is an uncharacterized protein from Schizosaccharomyces pombe (strain 972 / ATCC 24843) (Fission yeast).